Reading from the N-terminus, the 151-residue chain is Transcription elongation factor GreA (151 aa).

The stretch at 41–62 (AEYHAAREKQSFIEGRIKELEA) forms a coiled coil.

Belongs to the GreA/GreB family.

Necessary for efficient RNA polymerase transcription elongation past template-encoded arresting sites. The arresting sites in DNA have the property of trapping a certain fraction of elongating RNA polymerases that pass through, resulting in locked ternary complexes. Cleavage of the nascent transcript by cleavage factors such as GreA or GreB allows the resumption of elongation from the new 3'terminus. GreA releases sequences of 2 to 3 nucleotides. The protein is Transcription elongation factor GreA of Cereibacter sphaeroides (strain ATCC 17023 / DSM 158 / JCM 6121 / CCUG 31486 / LMG 2827 / NBRC 12203 / NCIMB 8253 / ATH 2.4.1.) (Rhodobacter sphaeroides).